A 596-amino-acid chain; its full sequence is Transcription factor IIIB 70 kDa subunit (596 aa).

Residues 1-33 form a TFIIB-type zinc finger; that stretch reads MPVCKNCHGTEFERDLSNANNDLVCKACGVVSE. Residues cysteine 4, cysteine 7, cysteine 25, and cysteine 28 each contribute to the Zn(2+) site. Tandem repeats lie at residues 90–166 and 185–264. Disordered stretches follow at residues 363–421 and 509–534; these read GENI…NESG and IATGNTSVKKKRTRRRNNTRSDEPTK. Residues 365-375 are compositionally biased toward basic and acidic residues; that stretch reads NIYHEGSENET. Phosphoserine occurs at positions 381 and 384. A compositionally biased stretch (basic and acidic residues) spans 388 to 421; the sequence is EHVEGEDKETEGTEEKVKKVKTKTSEEKKENESG. Positions 516–526 are enriched in basic residues; it reads VKKKRTRRRNN.

It belongs to the TFIIB family. As to quaternary structure, TFIIIB comprises the TATA-binding protein (TBP), the B-related factor (BRF) and the B' component (TFC5).

It localises to the nucleus. Its function is as follows. General activator of RNA polymerase III transcription. Interacts with TBP. Binds to Pol III subunit C34 and to the TAU135 component of TFIIIC. The chain is Transcription factor IIIB 70 kDa subunit (BRF1) from Saccharomyces cerevisiae (strain ATCC 204508 / S288c) (Baker's yeast).